The sequence spans 706 residues: Gamma-adducin (706 aa).

Residues 1–10 show a composition bias toward polar residues; the sequence is MSSDASQGVI. The segment at 1-20 is disordered; sequence MSSDASQGVITTPPPPSMPH. N-acetylserine is present on serine 2. Serine 42, serine 64, serine 402, serine 414, serine 423, serine 442, and serine 461 each carry phosphoserine. Disordered regions lie at residues 471 to 497, 535 to 555, 575 to 610, and 666 to 706; these read AEDS…LNTN, PSTM…NPFS, GLED…KLEE, and EKIE…KVEA. Residue lysine 484 forms a Glycyl lysine isopeptide (Lys-Gly) (interchain with G-Cter in SUMO2) linkage. A phosphoserine mark is found at serine 585, serine 590, serine 673, serine 677, serine 679, serine 681, and serine 683. The span at 589-602 shows a compositional bias: low complexity; that stretch reads SSVSQIQSQTQSPQ. Basic residues predominate over residues 682–706; that stretch reads PSKKKKKFRTPSFLKKNKKKEKVEA. The tract at residues 684–701 is interaction with calmodulin; sequence KKKKKFRTPSFLKKNKKK.

The protein belongs to the aldolase class II family. Adducin subfamily. Heterodimer of an alpha and a gamma subunit. Post-translationally, sumoylated. Proteolytically cleaved by asparagine endopeptidase (AEP) into 2 fragments. Overexpression of the 1-357 fragment induces neuronal apoptosis, and overexpression of either 1-357 or 358-706 fragment increases the degeneration of dendritic spines. Overexpression of the 1-357 fragment impairs neurite outgrowth by downregulating the expression of Rac2, and induces synaptic dysfunction and cognitive impairments in tau P301S transgenic mice, a mouse model for Alzheimer disease (AD). As to expression, ubiquitously expressed. In terms of tissue distribution, cleavage fragment 1-357 is abundantly expressed in the brain of patients with Alzheimer disease (AD), but hardly detectable in age-matched control individuals (at protein level).

It localises to the cytoplasm. Its subcellular location is the cytoskeleton. The protein localises to the cell membrane. In terms of biological role, membrane-cytoskeleton-associated protein that promotes the assembly of the spectrin-actin network. Plays a role in actin filament capping. Binds to calmodulin. Involved in myogenic reactivity of the renal afferent arteriole (Af-art), renal interlobular arteries and middle cerebral artery (MCA) to increased perfusion pressure. Involved in regulation of potassium channels in the vascular smooth muscle cells (VSMCs) of the Af-art and MCA ex vivo. Involved in regulation of glomerular capillary pressure, glomerular filtration rate (GFR) and glomerular nephrin expression in response to hypertension. Involved in renal blood flow (RBF) autoregulation. Plays a role in podocyte structure and function. Regulates globular monomer actin (G-actin) and filamentous polymer actin (F-actin) ratios in the primary podocytes affecting actin cytoskeleton organization. Regulates expression of synaptopodin, RhoA, Rac1 and CDC42 in the renal cortex and the primary podocytes. Regulates expression of nephrin in the glomeruli and in the primary podocytes, expression of nephrin and podocinin in the renal cortex, and expression of focal adhesion proteins integrin alpha-3 and integrin beta-1 in the glomeruli. Involved in cell migration and cell adhesion of podocytes, and in podocyte foot process effacement. Regulates expression of profibrotics markers MMP2, MMP9, TGF beta-1, tubular tight junction protein E-cadherin, and mesenchymal markers vimentin and alpha-SMA. Promotes the growth of neurites. The polypeptide is Gamma-adducin (ADD3) (Homo sapiens (Human)).